Here is a 373-residue protein sequence, read N- to C-terminus: Arfaptin-1 (373 aa).

The disordered stretch occupies residues 1-47 (MAQESPKNSAAEIPVTSNGEVDDSREHSFNRDLKHSLPSGLGLSETQ). N-acetylalanine is present on Ala-2. Residues Ser-5, Ser-28, Ser-36, Ser-39, Ser-69, Ser-79, and Ser-132 each carry the phosphoserine modification. Basic and acidic residues predominate over residues 22–35 (DDSREHSFNRDLKH). The AH domain occupies 153–353 (TVDLELEAQI…NQKQLEQTLK (201 aa)). Thr-361 is subject to Phosphothreonine.

As to quaternary structure, forms homodimers or heterodimers with ARFIP2. Interacts with non-myristoylated GTP-bound ARF3, but not to GDP-bound ARF3. Interacts with ARF1. Binds with lower affinity to ARF5 and with very little affinity to ARF6. Interacts with ARL1. Interacts with ATG9A. Phosphorylated by PRKD1; phosphorylation delocalizes ARFIP1 from the Golgi and disrupts its ability to inhibit the activity of ADP-ribosylation factor, an important component of the vesicle scission machinery. Ubiquitously expressed. Higher levels in liver, pancreas, placenta, skeletal muscle and heart.

The protein localises to the golgi apparatus. It is found in the trans-Golgi network membrane. Plays a role in controlling biogenesis of secretory granules at the trans-Golgi network. Mechanistically, binds ARF-GTP at the neck of a growing secretory granule precursor and forms a protective scaffold. Once the granule precursor has been completely loaded, active PRKD1 phosphorylates ARFIP1 and releases it from ARFs. In turn, ARFs induce fission. Through this mechanism, ensures proper secretory granule formation at the Golgi of pancreatic beta cells. The polypeptide is Arfaptin-1 (Homo sapiens (Human)).